The primary structure comprises 93 residues: Co-chaperonin GroES (93 aa).

The protein belongs to the GroES chaperonin family. In terms of assembly, heptamer of 7 subunits arranged in a ring. Interacts with the chaperonin GroEL.

It is found in the cytoplasm. Together with the chaperonin GroEL, plays an essential role in assisting protein folding. The GroEL-GroES system forms a nano-cage that allows encapsulation of the non-native substrate proteins and provides a physical environment optimized to promote and accelerate protein folding. GroES binds to the apical surface of the GroEL ring, thereby capping the opening of the GroEL channel. This Streptococcus anginosus protein is Co-chaperonin GroES.